We begin with the raw amino-acid sequence, 458 residues long: Probable M18 family aminopeptidase 1 (458 aa).

Zn(2+) contacts are provided by His-95, His-170, and His-434.

This sequence belongs to the peptidase M18 family. It depends on Zn(2+) as a cofactor.

The sequence is that of Probable M18 family aminopeptidase 1 (apeA) from Borreliella burgdorferi (strain ATCC 35210 / DSM 4680 / CIP 102532 / B31) (Borrelia burgdorferi).